A 142-amino-acid polypeptide reads, in one-letter code: Large-conductance mechanosensitive channel (142 aa).

The next 3 membrane-spanning stretches (helical) occupy residues 14–34 (VMDLAVGVIIGAAFSKIVDSV), 38–58 (LVMPVVGAITGGGFDFSNYFL), and 82–102 (GNFITVLINFLILAWIIFLLI).

It belongs to the MscL family. As to quaternary structure, homopentamer.

Its subcellular location is the cell inner membrane. Channel that opens in response to stretch forces in the membrane lipid bilayer. May participate in the regulation of osmotic pressure changes within the cell. The chain is Large-conductance mechanosensitive channel from Rhizobium meliloti (strain 1021) (Ensifer meliloti).